The primary structure comprises 1135 residues: Exportin-5 (1135 aa).

Residues 32–117 (SQVFLEEIKT…KEKLVTILVD (86 aa)) enclose the Importin N-terminal domain. A pre-siRNA binding region spans residues 630–631 (TE).

The protein belongs to the exportin family. As to quaternary structure, found in a nuclear export complex with RanGTP, exportin and pre-miRNA.

Its subcellular location is the nucleus. The protein resides in the cytoplasm. Functionally, mediates the nuclear export of proteins bearing a double-stranded RNA binding domain (dsRBD) and double-stranded RNAs (cargos). Its function is as follows. Mediates the nuclear export of micro-RNA precursors, which form short hairpins. This chain is Exportin-5 (xpo5), found in Dictyostelium discoideum (Social amoeba).